The sequence spans 64 residues: Small ribosomal subunit protein bS21 (64 aa).

It belongs to the bacterial ribosomal protein bS21 family.

This Karelsulcia muelleri (strain GWSS) (Sulcia muelleri) protein is Small ribosomal subunit protein bS21.